A 240-amino-acid chain; its full sequence is T-cell antigen CD7 (240 aa).

The signal sequence occupies residues 1–25 (MAGPPRLLLLPLLLALARGLPGALA). In terms of domain architecture, Ig-like spans 26–130 (AQEVQQSPHC…NVYGSGTLVL (105 aa)). Residues 26–180 (AQEVQQSPHC…PDPPAASALP (155 aa)) are Extracellular-facing. Disulfide bonds link Cys35-Cys142 and Cys48-Cys114. 2 N-linked (GlcNAc...) asparagine glycosylation sites follow: Asn45 and Asn96. The interval 140 to 172 (HRCSDAPPRASALPAPPTGSALPDPQTASALPD) is disordered. Tandem repeats lie at residues 145-153 (APPRASALP), 154-162 (APPTGSALP), 163-171 (DPQTASALP), and 172-180 (DPPAASALP). The tract at residues 145–180 (APPRASALPAPPTGSALPDPQTASALPDPPAASALP) is 4 X 9 AA tandem repeats, potential spacer function. A helical membrane pass occupies residues 181-201 (AALAVISFLLGLGLGVACVLA). Cys198 carries the S-palmitoyl cysteine lipid modification. The Cytoplasmic segment spans residues 202–240 (RTQIKKLCSWRDKNSAACVVYEDMSHSRCNTLSSPNQYQ).

Interacts with SECTM1. As to expression, expressed on T-cells and natural killer (NK) cells and their precursors.

It is found in the membrane. Functionally, transmembrane glycoprotein expressed by T-cells and natural killer (NK) cells and their precursors. Plays a costimulatory role in T-cell activation upon binding to its ligand K12/SECTM1. In turn, mediates the production of cytokines such as IL-2. On resting NK-cells, CD7 activation results in a significant induction of interferon-gamma levels. The chain is T-cell antigen CD7 (CD7) from Homo sapiens (Human).